Reading from the N-terminus, the 318-residue chain is MNGDHMVLGSSVTDKKAIILVTILLLLRLVAIAGNGFITAALGVEWVLRRMLLPCDKLLVSLGASRFCLQSVVMGKTIYVFLHPMAFPYNPVLQFLAFQWDFLNAATLWSSTWLSVFYCVKIATFTHPVFFWLKHKLSGWLPWMLFSSVGLSSFTTILFFIGNHRMYQNYLRNHLQPWNVTGDSIRSYCEKFYLFPLKMITWTMPTAVFFICMILLITSLGRHRKKALLTTSGFREPSVQAHIKALLALLSFAMLFISYFLSLVFSAAGIFPPLDFKFWVWESVIYLCAAVHPIILLFSNCRLRAVLKSRRSSRCGTP.

Over 1-7 the chain is Extracellular; sequence MNGDHMV. The chain crosses the membrane as a helical span at residues 8–28; it reads LGSSVTDKKAIILVTILLLLR. The Cytoplasmic segment spans residues 29–40; sequence LVAIAGNGFITA. The helical transmembrane segment at 41–61 threads the bilayer; it reads ALGVEWVLRRMLLPCDKLLVS. The Extracellular segment spans residues 62 to 88; the sequence is LGASRFCLQSVVMGKTIYVFLHPMAFP. Residues 89-109 traverse the membrane as a helical segment; it reads YNPVLQFLAFQWDFLNAATLW. Residues 110–128 lie on the Cytoplasmic side of the membrane; sequence SSTWLSVFYCVKIATFTHP. A helical transmembrane segment spans residues 129–149; it reads VFFWLKHKLSGWLPWMLFSSV. Over 150-183 the chain is Extracellular; the sequence is GLSSFTTILFFIGNHRMYQNYLRNHLQPWNVTGD. The N-linked (GlcNAc...) asparagine glycan is linked to Asn-179. The helical transmembrane segment at 184 to 204 threads the bilayer; it reads SIRSYCEKFYLFPLKMITWTM. At 205-234 the chain is on the cytoplasmic side; sequence PTAVFFICMILLITSLGRHRKKALLTTSGF. Residues 235–255 form a helical membrane-spanning segment; that stretch reads REPSVQAHIKALLALLSFAML. Over 256–264 the chain is Extracellular; it reads FISYFLSLV. Residues 265–285 form a helical membrane-spanning segment; it reads FSAAGIFPPLDFKFWVWESVI. At 286-318 the chain is on the cytoplasmic side; sequence YLCAAVHPIILLFSNCRLRAVLKSRRSSRCGTP.

The protein belongs to the G-protein coupled receptor T2R family. Expressed in subsets of taste receptor cells of the tongue and exclusively in gustducin-positive cells.

The protein localises to the membrane. In terms of biological role, receptor that may play a role in the perception of bitterness and is gustducin-linked. May play a role in sensing the chemical composition of the gastrointestinal content. The activity of this receptor may stimulate alpha gustducin, mediate PLC-beta-2 activation and lead to the gating of TRPM5. The sequence is that of Taste receptor type 2 member 60 (TAS2R60) from Homo sapiens (Human).